We begin with the raw amino-acid sequence, 85 residues long: SKP1-like protein 6 (85 aa).

The interaction with the F-box domain of F-box proteins stretch occupies residues 65–85 (MMAANYLNIQSLLDLTFSNCR).

It belongs to the SKP1 family. As to quaternary structure, part of a SCF (SKP1-cullin-F-box) protein ligase complex.

Its subcellular location is the nucleus. Its pathway is protein modification; protein ubiquitination. In terms of biological role, involved in ubiquitination and subsequent proteasomal degradation of target proteins. Together with CUL1, RBX1 and a F-box protein, it forms a SCF E3 ubiquitin ligase complex. The functional specificity of this complex depends on the type of F-box protein. In the SCF complex, it serves as an adapter that links the F-box protein to CUL1. The protein is SKP1-like protein 6 (ASK6) of Arabidopsis thaliana (Mouse-ear cress).